We begin with the raw amino-acid sequence, 121 residues long: Ribonuclease P protein component (121 aa).

It belongs to the RnpA family. Consists of a catalytic RNA component (M1 or rnpB) and a protein subunit.

It carries out the reaction Endonucleolytic cleavage of RNA, removing 5'-extranucleotides from tRNA precursor.. In terms of biological role, RNaseP catalyzes the removal of the 5'-leader sequence from pre-tRNA to produce the mature 5'-terminus. It can also cleave other RNA substrates such as 4.5S RNA. The protein component plays an auxiliary but essential role in vivo by binding to the 5'-leader sequence and broadening the substrate specificity of the ribozyme. The polypeptide is Ribonuclease P protein component (Neisseria meningitidis serogroup B (strain ATCC BAA-335 / MC58)).